The primary structure comprises 242 residues: UPF0309 protein Oant_1457 (242 aa).

Residues 30 to 214 (AAELITAAAL…AKLVGKGDAP (185 aa)) enclose the SIS domain.

The protein belongs to the UPF0309 family.

In Brucella anthropi (strain ATCC 49188 / DSM 6882 / CCUG 24695 / JCM 21032 / LMG 3331 / NBRC 15819 / NCTC 12168 / Alc 37) (Ochrobactrum anthropi), this protein is UPF0309 protein Oant_1457.